The chain runs to 321 residues: D-alanine--D-alanine ligase (321 aa).

Residues 121-315 (RSWFLTNNIN…FVNLIEEILK (195 aa)) form the ATP-grasp domain. Residue 148-199 (IKRPYVIKPFTQGSSIGVEVIFEEDDFNFANYDFPYGDEVIIEKYIKGRELQ) coordinates ATP. Mg(2+)-binding residues include glutamate 268, glutamate 282, and asparagine 284.

It belongs to the D-alanine--D-alanine ligase family. Mg(2+) is required as a cofactor. Requires Mn(2+) as cofactor.

It is found in the cytoplasm. The catalysed reaction is 2 D-alanine + ATP = D-alanyl-D-alanine + ADP + phosphate + H(+). The protein operates within cell wall biogenesis; peptidoglycan biosynthesis. In terms of biological role, cell wall formation. The protein is D-alanine--D-alanine ligase of Rickettsia bellii (strain RML369-C).